Here is a 311-residue protein sequence, read N- to C-terminus: Olfactory receptor 10G4 (311 aa).

At 1 to 23 (MSNASLVTAFILTGLPHAPGLDA) the chain is on the extracellular side. Asn3 carries N-linked (GlcNAc...) asparagine glycosylation. A helical membrane pass occupies residues 24–44 (LLFGIFLVVYVLTVLGNLLIL). Over 45–52 (LVIRVDSH) the chain is Cytoplasmic. A helical transmembrane segment spans residues 53–73 (LHTPMYYFLTNLSFIDMWFST). At 74–98 (VTVPKMLMTLVSPSGRAISFHSCVA) the chain is on the extracellular side. Cys96 and Cys188 form a disulfide bridge. A helical membrane pass occupies residues 99 to 119 (QLYFFHFLGSTECFLYTVMSY). Residues 120-138 (DRYLAISYPLRYTSMMSGS) lie on the Cytoplasmic side of the membrane. A helical membrane pass occupies residues 139 to 159 (RCALLATGTWLSGSLHSAVQT). Over 160–196 (ILTFHLPYCGPNQIQHYFCDAPPILKLACADTSANVM) the chain is Extracellular. A helical transmembrane segment spans residues 197 to 216 (VIFVDIGIVASGCFVLIVLS). Residues 217 to 236 (YVSIVCSILRIRTSDGRRRA) lie on the Cytoplasmic side of the membrane. The helical transmembrane segment at 237 to 257 (FQTCASHCIVVLCFFVPCVVI) threads the bilayer. Topologically, residues 258 to 268 (YLRPGSMDAMD) are extracellular. The helical transmembrane segment at 269–289 (GVVAIFYTVLTPLLNPVVYTL) threads the bilayer. Residues 290-311 (RNKEVKKAVLKLRDKVAHPQRK) are Cytoplasmic-facing.

This sequence belongs to the G-protein coupled receptor 1 family.

The protein localises to the cell membrane. Its function is as follows. Odorant receptor. The protein is Olfactory receptor 10G4 (OR10G4) of Homo sapiens (Human).